The following is a 149-amino-acid chain: Large ribosomal subunit protein eL19 (149 aa).

Over residues 55–69 (KGISSARKKEVQEQK) the composition is skewed to basic and acidic residues. Residues 55–93 (KGISSARKKEVQEQKRKGKRKGPGSRRGAKGARTPKKEK) are disordered. Residues 70 to 88 (RKGKRKGPGSRRGAKGART) show a composition bias toward basic residues.

It belongs to the eukaryotic ribosomal protein eL19 family. As to quaternary structure, part of the 50S ribosomal subunit.

In terms of biological role, binds to the 23S rRNA. The protein is Large ribosomal subunit protein eL19 of Methanococcus vannielii.